We begin with the raw amino-acid sequence, 941 residues long: ATP-dependent 6-phosphofructokinase subunit beta (941 aa).

An N-terminal catalytic PFK domain 1 region spans residues 2–558 (PDASLFNGTS…HMKNFISTNS (557 aa)). ATP is bound by residues G191, 255–256 (RC), and 285–288 (GDGS). Residue D286 coordinates Mg(2+). Beta-D-fructose 6-phosphate-binding positions include 331–333 (SID), R368, and 375–377 (MGR). The active-site Proton acceptor is D333. Residues I395, 400–405 (KPASSR), and Q410 each bind ATP. Residues E432, R460, and 466–469 (HVQR) contribute to the beta-D-fructose 6-phosphate site. Residue 557-558 (NS) participates in ATP binding. Residues 559–572 (ADHVPPSLPLEKRK) are interdomain linker. A C-terminal regulatory PFK domain 2 region spans residues 573-941 (KIAIINVGAP…SDMLSGRTSL (369 aa)). Beta-D-fructose 2,6-bisphosphate contacts are provided by residues R643, 701–705 (TISNN), R739, 746–748 (QGG), E806, K832, 838–841 (HVQQ), and R918.

The protein belongs to the phosphofructokinase type A (PFKA) family. ATP-dependent PFK group I subfamily. Eukaryotic two domain clade 'E' sub-subfamily. Heterododecamer of 4 alpha, 4 beta and 4 gamma chains. It depends on Mg(2+) as a cofactor.

It localises to the cytoplasm. It catalyses the reaction beta-D-fructose 6-phosphate + ATP = beta-D-fructose 1,6-bisphosphate + ADP + H(+). Its pathway is carbohydrate degradation; glycolysis; D-glyceraldehyde 3-phosphate and glycerone phosphate from D-glucose: step 3/4. With respect to regulation, allosterically activated by ADP, AMP, or fructose 2,6-bisphosphate, and allosterically inhibited by ATP or citrate. Functionally, catalyzes the phosphorylation of D-fructose 6-phosphate to fructose 1,6-bisphosphate by ATP, the first committing step of glycolysis. This is ATP-dependent 6-phosphofructokinase subunit beta (PFK2) from Komagataella pastoris (Yeast).